The sequence spans 420 residues: ATP phosphoribosyltransferase regulatory subunit (420 aa).

The protein belongs to the class-II aminoacyl-tRNA synthetase family. HisZ subfamily. Heteromultimer composed of HisG and HisZ subunits.

Its subcellular location is the cytoplasm. The protein operates within amino-acid biosynthesis; L-histidine biosynthesis; L-histidine from 5-phospho-alpha-D-ribose 1-diphosphate: step 1/9. Its function is as follows. Required for the first step of histidine biosynthesis. May allow the feedback regulation of ATP phosphoribosyltransferase activity by histidine. The sequence is that of ATP phosphoribosyltransferase regulatory subunit from Bacillus cereus (strain AH187).